We begin with the raw amino-acid sequence, 698 residues long: DNA-directed RNA polymerase subunit beta' (698 aa).

The Zn(2+) site is built by C69, C71, C89, and C92. D509, D511, and D513 together coordinate Mg(2+).

It belongs to the RNA polymerase beta' chain family. RpoC1 subfamily. In plastids the minimal PEP RNA polymerase catalytic core is composed of four subunits: alpha, beta, beta', and beta''. When a (nuclear-encoded) sigma factor is associated with the core the holoenzyme is formed, which can initiate transcription. Mg(2+) is required as a cofactor. The cofactor is Zn(2+).

It is found in the plastid. The protein resides in the chloroplast. The enzyme catalyses RNA(n) + a ribonucleoside 5'-triphosphate = RNA(n+1) + diphosphate. Functionally, DNA-dependent RNA polymerase catalyzes the transcription of DNA into RNA using the four ribonucleoside triphosphates as substrates. This Cryptomeria japonica (Japanese cedar) protein is DNA-directed RNA polymerase subunit beta'.